The following is a 226-amino-acid chain: Orotidine 5'-phosphate decarboxylase (226 aa).

Residues Asp-8, Lys-30, 58 to 67 (DLKLYDIPNT), Thr-117, Arg-177, Gln-186, Gly-206, and Arg-207 contribute to the substrate site. Lys-60 (proton donor) is an active-site residue.

This sequence belongs to the OMP decarboxylase family. Type 1 subfamily. As to quaternary structure, homodimer.

It catalyses the reaction orotidine 5'-phosphate + H(+) = UMP + CO2. Its pathway is pyrimidine metabolism; UMP biosynthesis via de novo pathway; UMP from orotate: step 2/2. Functionally, catalyzes the decarboxylation of orotidine 5'-monophosphate (OMP) to uridine 5'-monophosphate (UMP). In Campylobacter concisus (strain 13826), this protein is Orotidine 5'-phosphate decarboxylase.